We begin with the raw amino-acid sequence, 186 residues long: Peptidyl-tRNA hydrolase (186 aa).

Tyr13 is a binding site for tRNA. Residue His18 is the Proton acceptor of the active site. Positions 59, 61, and 107 each coordinate tRNA.

The protein belongs to the PTH family. In terms of assembly, monomer.

It localises to the cytoplasm. The catalysed reaction is an N-acyl-L-alpha-aminoacyl-tRNA + H2O = an N-acyl-L-amino acid + a tRNA + H(+). Functionally, hydrolyzes ribosome-free peptidyl-tRNAs (with 1 or more amino acids incorporated), which drop off the ribosome during protein synthesis, or as a result of ribosome stalling. Catalyzes the release of premature peptidyl moieties from peptidyl-tRNA molecules trapped in stalled 50S ribosomal subunits, and thus maintains levels of free tRNAs and 50S ribosomes. The polypeptide is Peptidyl-tRNA hydrolase (Thermotoga petrophila (strain ATCC BAA-488 / DSM 13995 / JCM 10881 / RKU-1)).